The chain runs to 416 residues: Gamma-glutamyl phosphate reductase (416 aa).

The protein belongs to the gamma-glutamyl phosphate reductase family.

It is found in the cytoplasm. The catalysed reaction is L-glutamate 5-semialdehyde + phosphate + NADP(+) = L-glutamyl 5-phosphate + NADPH + H(+). It participates in amino-acid biosynthesis; L-proline biosynthesis; L-glutamate 5-semialdehyde from L-glutamate: step 2/2. Functionally, catalyzes the NADPH-dependent reduction of L-glutamate 5-phosphate into L-glutamate 5-semialdehyde and phosphate. The product spontaneously undergoes cyclization to form 1-pyrroline-5-carboxylate. The chain is Gamma-glutamyl phosphate reductase from Leptospira interrogans serogroup Icterohaemorrhagiae serovar Lai (strain 56601).